Consider the following 200-residue polypeptide: MQLNVNDAQAIEVSELTFGGEFNETLVHQAVVAYMAGGRQGSKQQKTRSDVRGGGKRPWRQKGTGRARAGTIRSPIWRGGGTTFAARPQDHTQKLNKKMYRAALRSILAELVRTDRLVVVQDFAVEAPKTKDLLSKLTGMGLTDVLIVSDAVDQNLYLAARNLPHVDVRDVQGSDPVSLIAYDKVLITVSAVKKFEELLG.

Positions 38 to 68 (GRQGSKQQKTRSDVRGGGKRPWRQKGTGRAR) are disordered. Positions 54–65 (GGKRPWRQKGTG) are enriched in basic residues.

The protein belongs to the universal ribosomal protein uL4 family. As to quaternary structure, part of the 50S ribosomal subunit.

In terms of biological role, one of the primary rRNA binding proteins, this protein initially binds near the 5'-end of the 23S rRNA. It is important during the early stages of 50S assembly. It makes multiple contacts with different domains of the 23S rRNA in the assembled 50S subunit and ribosome. Functionally, forms part of the polypeptide exit tunnel. This is Large ribosomal subunit protein uL4 from Pseudomonas savastanoi pv. phaseolicola (strain 1448A / Race 6) (Pseudomonas syringae pv. phaseolicola (strain 1448A / Race 6)).